The primary structure comprises 201 residues: Probable GTP-binding protein EngB (201 aa).

The region spanning 23–196 (TGPEIALAGR…HEAVEEILSM (174 aa)) is the EngB-type G domain. GTP contacts are provided by residues 31-38 (GRSNVGKS), 58-62 (GKTQM), 76-79 (DLPG), 143-146 (TKAD), and 175-177 (YSA). The Mg(2+) site is built by Ser38 and Thr60.

This sequence belongs to the TRAFAC class TrmE-Era-EngA-EngB-Septin-like GTPase superfamily. EngB GTPase family. Requires Mg(2+) as cofactor.

Its function is as follows. Necessary for normal cell division and for the maintenance of normal septation. The protein is Probable GTP-binding protein EngB of Desulfitobacterium hafniense (strain DSM 10664 / DCB-2).